The chain runs to 22 residues: MICOS complex subunit MIC60 (22 aa).

This sequence belongs to the MICOS complex subunit Mic60 family. As to quaternary structure, component of the mitochondrial contact site and cristae organizing system (MICOS) complex, composed of at least MICOS10/MIC10, CHCHD3/MIC19, CHCHD6/MIC25, APOOL/MIC27, IMMT/MIC60, APOO/MIC23/MIC26 and MICOS13/MIC13. This complex was also known under the names MINOS or MitOS complex. The MICOS complex associates with mitochondrial outer membrane proteins SAMM50, MTX1 and MTX2 (together described as components of the mitochondrial outer membrane sorting assembly machinery (SAM) complex) and DNAJC11, mitochondrial inner membrane protein TMEM11 and with HSPA9. The MICOS and SAM complexes together with DNAJC11 are part of a large protein complex spanning both membranes termed the mitochondrial intermembrane space bridging (MIB) complex. Interacts with HSPA1A/HSPA1B and OPA1, preferentially with the soluble OPA1 form. Interacts with MICOS13/MIC13, MICOS10/MIC10, CHCHD3/MIC19, CHCHD6/MIC25, SAMM50 and TMEM11. Interacts with APOO/MIC23/MIC26 and APOOL/MIC27. Interacts with ARMC1. Interacts with ARMC12.

It is found in the mitochondrion inner membrane. The protein resides in the mitochondrion. Functionally, component of the MICOS complex, a large protein complex of the mitochondrial inner membrane that plays crucial roles in the maintenance of crista junctions, inner membrane architecture, and formation of contact sites to the outer membrane. Plays an important role in the maintenance of the MICOS complex stability and the mitochondrial cristae morphology. The chain is MICOS complex subunit MIC60 from Mesocricetus auratus (Golden hamster).